A 494-amino-acid polypeptide reads, in one-letter code: Alanine--glyoxylate aminotransferase 2-like (494 aa).

Residue Lys-291 is modified to N6-(pyridoxal phosphate)lysine.

The protein belongs to the class-III pyridoxal-phosphate-dependent aminotransferase family. Pyridoxal 5'-phosphate serves as cofactor.

The sequence is that of Alanine--glyoxylate aminotransferase 2-like from Drosophila melanogaster (Fruit fly).